The sequence spans 258 residues: MLQITPLPAFNDNYIWVFQSQQSSGVYVVDPGDGQVVTDYLTQTNLPLLGILITHHHHDHTGGIEQLLKLFGEDTPVYGPQVENIAGVNRPISTNGNITLENIGLNTTVIQVPGHTSGHICYLIEDALFCGDTLFSGGCGRLFEGTAEQMYQSLTQLSLLPDNTRVFCAHEYTLANLHFAKAVEANNPALIEYTVKAHALRAENKPTLPSSIALEKAINPFLRLDSLEIQKSLAVQFQQPIADPVQSFALLRQWKDNF.

Zn(2+)-binding residues include H55, H57, D59, H60, H115, D132, and H170.

This sequence belongs to the metallo-beta-lactamase superfamily. Glyoxalase II family. In terms of assembly, monomer. Zn(2+) serves as cofactor.

The enzyme catalyses an S-(2-hydroxyacyl)glutathione + H2O = a 2-hydroxy carboxylate + glutathione + H(+). The protein operates within secondary metabolite metabolism; methylglyoxal degradation; (R)-lactate from methylglyoxal: step 2/2. Its function is as follows. Thiolesterase that catalyzes the hydrolysis of S-D-lactoyl-glutathione to form glutathione and D-lactic acid. In Shewanella halifaxensis (strain HAW-EB4), this protein is Hydroxyacylglutathione hydrolase.